The sequence spans 143 residues: MFMGEYHHTIDDKGRLIIPARFREELGVKFVITKGLDNCLFVYPMQGWAEMEQKLRSLPFTRADARAFVRFFFSGATECELDRQGRILLPGNLREYARLDKEVVVVGVSTRVEIWSRSRWEEYCRETSDQYEALAEKMVDFDI.

2 SpoVT-AbrB domains span residues 5–47 and 76–119; these read EYHH…PMQG and ATEC…SRSR.

Belongs to the MraZ family. In terms of assembly, forms oligomers.

Its subcellular location is the cytoplasm. The protein localises to the nucleoid. The sequence is that of Transcriptional regulator MraZ from Moorella thermoacetica (strain ATCC 39073 / JCM 9320).